The sequence spans 381 residues: Homoserine O-succinyltransferase (381 aa).

The 316-residue stretch at 45 to 360 (NAVLVCHALN…PHGHDAFLLD (316 aa)) folds into the AB hydrolase-1 domain. Residue serine 151 is the Nucleophile of the active site. Substrate is bound at residue arginine 221. Residues aspartate 321 and histidine 354 contribute to the active site. Substrate is bound at residue aspartate 355.

It belongs to the AB hydrolase superfamily. MetX family. In terms of assembly, homodimer.

The protein localises to the cytoplasm. It catalyses the reaction L-homoserine + succinyl-CoA = O-succinyl-L-homoserine + CoA. It participates in amino-acid biosynthesis; L-methionine biosynthesis via de novo pathway; O-succinyl-L-homoserine from L-homoserine: step 1/1. Its function is as follows. Transfers a succinyl group from succinyl-CoA to L-homoserine, forming succinyl-L-homoserine. This is Homoserine O-succinyltransferase from Burkholderia mallei (strain NCTC 10247).